Consider the following 234-residue polypeptide: Ribose-5-phosphate isomerase A (234 aa).

Residues 28 to 31, 85 to 88, and 98 to 101 contribute to the substrate site; these read TGST, DGAD, and KGLG. Glu-107 (proton acceptor) is an active-site residue. Lys-125 is a binding site for substrate.

This sequence belongs to the ribose 5-phosphate isomerase family. In terms of assembly, homodimer.

The enzyme catalyses aldehydo-D-ribose 5-phosphate = D-ribulose 5-phosphate. It participates in carbohydrate degradation; pentose phosphate pathway; D-ribose 5-phosphate from D-ribulose 5-phosphate (non-oxidative stage): step 1/1. Its function is as follows. Catalyzes the reversible conversion of ribose-5-phosphate to ribulose 5-phosphate. This chain is Ribose-5-phosphate isomerase A, found in Roseiflexus castenholzii (strain DSM 13941 / HLO8).